The following is a 424-amino-acid chain: Glutamate-1-semialdehyde 2,1-aminomutase (424 aa).

K263 is subject to N6-(pyridoxal phosphate)lysine.

It belongs to the class-III pyridoxal-phosphate-dependent aminotransferase family. HemL subfamily. In terms of assembly, homodimer. Pyridoxal 5'-phosphate serves as cofactor.

The protein localises to the cytoplasm. The catalysed reaction is (S)-4-amino-5-oxopentanoate = 5-aminolevulinate. It participates in porphyrin-containing compound metabolism; protoporphyrin-IX biosynthesis; 5-aminolevulinate from L-glutamyl-tRNA(Glu): step 2/2. The chain is Glutamate-1-semialdehyde 2,1-aminomutase from Campylobacter jejuni subsp. jejuni serotype O:6 (strain 81116 / NCTC 11828).